A 382-amino-acid chain; its full sequence is Dual-specificity RNA methyltransferase RlmN (382 aa).

Catalysis depends on E95, which acts as the Proton acceptor. Residues 101–347 (EDDRGTLCIS…TTVRKTRGDD (247 aa)) enclose the Radical SAM core domain. A disulfide bond links C108 and C352. [4Fe-4S] cluster is bound by residues C115, C119, and C122. S-adenosyl-L-methionine is bound by residues 178–179 (GE), S210, 232–234 (SLH), and N309. C352 functions as the S-methylcysteine intermediate in the catalytic mechanism.

This sequence belongs to the radical SAM superfamily. RlmN family. It depends on [4Fe-4S] cluster as a cofactor.

The protein localises to the cytoplasm. The enzyme catalyses adenosine(2503) in 23S rRNA + 2 reduced [2Fe-2S]-[ferredoxin] + 2 S-adenosyl-L-methionine = 2-methyladenosine(2503) in 23S rRNA + 5'-deoxyadenosine + L-methionine + 2 oxidized [2Fe-2S]-[ferredoxin] + S-adenosyl-L-homocysteine. The catalysed reaction is adenosine(37) in tRNA + 2 reduced [2Fe-2S]-[ferredoxin] + 2 S-adenosyl-L-methionine = 2-methyladenosine(37) in tRNA + 5'-deoxyadenosine + L-methionine + 2 oxidized [2Fe-2S]-[ferredoxin] + S-adenosyl-L-homocysteine. Specifically methylates position 2 of adenine 2503 in 23S rRNA and position 2 of adenine 37 in tRNAs. m2A2503 modification seems to play a crucial role in the proofreading step occurring at the peptidyl transferase center and thus would serve to optimize ribosomal fidelity. The polypeptide is Dual-specificity RNA methyltransferase RlmN (Bordetella avium (strain 197N)).